Here is a 140-residue protein sequence, read N- to C-terminus: Large ribosomal subunit protein uL11 (140 aa).

It belongs to the universal ribosomal protein uL11 family. In terms of assembly, part of the ribosomal stalk of the 50S ribosomal subunit. Interacts with L10 and the large rRNA to form the base of the stalk. L10 forms an elongated spine to which L12 dimers bind in a sequential fashion forming a multimeric L10(L12)X complex. Post-translationally, one or more lysine residues are methylated.

Functionally, forms part of the ribosomal stalk which helps the ribosome interact with GTP-bound translation factors. The polypeptide is Large ribosomal subunit protein uL11 (Enterococcus faecalis (strain ATCC 700802 / V583)).